Here is a 455-residue protein sequence, read N- to C-terminus: tRNA modification GTPase MnmE (455 aa).

Residues Arg-24, Glu-81, and Lys-120 each contribute to the (6S)-5-formyl-5,6,7,8-tetrahydrofolate site. Residues 216–378 (GMTVVIAGRP…LREHLKACMG (163 aa)) form the TrmE-type G domain. Asn-226 lines the K(+) pocket. GTP-binding positions include 226–231 (NAGKSS), 245–251 (TDIAGTT), 270–273 (DTAG), 335–338 (NKAD), and 359–361 (SAR). Ser-230 serves as a coordination point for Mg(2+). The K(+) site is built by Thr-245, Ile-247, and Thr-250. Thr-251 contributes to the Mg(2+) binding site. (6S)-5-formyl-5,6,7,8-tetrahydrofolate is bound at residue Lys-455.

This sequence belongs to the TRAFAC class TrmE-Era-EngA-EngB-Septin-like GTPase superfamily. TrmE GTPase family. Homodimer. Heterotetramer of two MnmE and two MnmG subunits. Requires K(+) as cofactor.

It localises to the cytoplasm. Functionally, exhibits a very high intrinsic GTPase hydrolysis rate. Involved in the addition of a carboxymethylaminomethyl (cmnm) group at the wobble position (U34) of certain tRNAs, forming tRNA-cmnm(5)s(2)U34. This is tRNA modification GTPase MnmE from Pseudomonas aeruginosa (strain UCBPP-PA14).